A 144-amino-acid chain; its full sequence is Large ribosomal subunit protein uL14 (144 aa).

This sequence belongs to the universal ribosomal protein uL14 family. As to quaternary structure, part of the 50S ribosomal subunit. Forms a cluster with proteins L3 and L24e, part of which may contact the 16S rRNA in 2 intersubunit bridges.

Its function is as follows. Binds to 23S rRNA. Forms part of two intersubunit bridges in the 70S ribosome. The polypeptide is Large ribosomal subunit protein uL14 (Pyrobaculum arsenaticum (strain DSM 13514 / JCM 11321 / PZ6)).